Here is a 492-residue protein sequence, read N- to C-terminus: uncharacterized protein (492 aa).

A helical transmembrane segment spans residues 30-46; it reads YVCLSVAVAAVGYANYM. One can recognise a J domain in the interval 144-210; the sequence is NYYDVLNVNE…IRKNIYDNEG (67 aa).

Its subcellular location is the membrane. This is an uncharacterized protein from Plasmodium falciparum (isolate 3D7).